A 261-amino-acid chain; its full sequence is uncharacterized protein (261 aa).

It is found in the plastid. The protein localises to the chloroplast. This is an uncharacterized protein from Mesostigma viride (Green alga).